The primary structure comprises 304 residues: MTTLRIATRKSPLALWQSEHVAAALRQHHPGLEVVLVPMSTRGDEVLDRSLAAIGDKGLFLKELELAMLRGDADCAVHSFKDVPMELDDPFVLPAILERGDPADALVSNLYASLQALPLGARVGTSSLRRQAQLRAARPDLELIDLRGNVNTRLAKLDNGGYDAIVLACAGLQRLGLDERISARLDAPEWLPAPAQGAVAVECRGDDARIHSLLAVLDAGRTRACVEAERAMNRALHGSCHVPVAALARWEGEGLFLQGMVGSASDGRLIHADAHGSADDTQDLGRRVAQGLFDKGAAQLLAAL.

Position 240 is an S-(dipyrrolylmethanemethyl)cysteine (C240).

Belongs to the HMBS family. In terms of assembly, monomer. Dipyrromethane serves as cofactor.

It carries out the reaction 4 porphobilinogen + H2O = hydroxymethylbilane + 4 NH4(+). The protein operates within porphyrin-containing compound metabolism; protoporphyrin-IX biosynthesis; coproporphyrinogen-III from 5-aminolevulinate: step 2/4. Tetrapolymerization of the monopyrrole PBG into the hydroxymethylbilane pre-uroporphyrinogen in several discrete steps. The chain is Porphobilinogen deaminase from Xanthomonas oryzae pv. oryzae (strain KACC10331 / KXO85).